We begin with the raw amino-acid sequence, 218 residues long: 1-Cys peroxiredoxin (218 aa).

Residues 4–164 (LTIGDTIPDL…VLRVVESLQK (161 aa)) enclose the Thioredoxin domain. The active-site Cysteine sulfenic acid (-SOH) intermediate is cysteine 46. Positions 194–217 (KEMFPQGFKTADLPSKKEYLRFTN) match the Bipartite nuclear localization signal motif.

It belongs to the peroxiredoxin family. Prx6 subfamily.

It localises to the nucleus. The protein resides in the cytoplasm. It catalyses the reaction a hydroperoxide + [thioredoxin]-dithiol = an alcohol + [thioredoxin]-disulfide + H2O. In terms of biological role, thiol-specific peroxidase that catalyzes the reduction of hydrogen peroxide and organic hydroperoxides to water and alcohols, respectively. Seems to contribute to the inhibition of germination during stress. This chain is 1-Cys peroxiredoxin, found in Medicago truncatula (Barrel medic).